The sequence spans 359 residues: 4-galactosyl-N-acetylglucosaminide 3-alpha-L-fucosyltransferase FUT6 (359 aa).

At 1–14 the chain is on the cytoplasmic side; sequence MDPLGPAKPQWSWR. A helical; Signal-anchor for type II membrane protein transmembrane segment spans residues 15–34; it reads CCLTTLLFQLLVAVCFFSYL. At 35 to 359 the chain is on the lumenal side; the sequence is RVSRDDPTVY…QTRSIAAWFT (325 aa). N-linked (GlcNAc...) asparagine glycans are attached at residues Asn46, Asn91, Asn153, and Asn184. Residues 73–112 form a determines site-specific fucosylation region; the sequence is KPIALPRCSEMVPGTADCNITADRKVYPQADAVIVHHREV.

The protein belongs to the glycosyltransferase 10 family. As to quaternary structure, homodimer and monomer. Monomer (secreted form). Post-translationally, N-glycosylated. Proteolytic cleavage releases a secreted glycoform of 43 kDa.

The protein resides in the golgi apparatus. The protein localises to the golgi stack membrane. It is found in the secreted. The enzyme catalyses a beta-D-galactosyl-(1-&gt;4)-N-acetyl-beta-D-glucosaminyl derivative + GDP-beta-L-fucose = a beta-D-galactosyl-(1-&gt;4)-[alpha-L-fucosyl-(1-&gt;3)]-N-acetyl-beta-D-glucosaminyl derivative + GDP + H(+). The catalysed reaction is an N-acetyl-alpha-neuraminyl-(2-&gt;3)-beta-D-galactosyl-(1-&gt;4)-N-acetyl-beta-D-glucosaminyl derivative + GDP-beta-L-fucose = an alpha-Neu5Ac-(2-&gt;3)-beta-D-Gal-(1-&gt;4)-[alpha-L-Fuc-(1-&gt;3)]-beta-D-GlcNAc derivative + GDP + H(+). It carries out the reaction an alpha-Neu5Ac-(2-&gt;3)-beta-D-Gal-(1-&gt;4)-beta-D-GlcNAc-(1-&gt;3)-beta-D-Gal-(1-&gt;4)-[alpha-L-Fuc-(1-&gt;3)]-beta-D-GlcNAc derivative + GDP-beta-L-fucose = an alpha-Neu5Ac-(2-&gt;3)-beta-D-Gal-(1-&gt;4)-[alpha-L-Fuc-(1-&gt;3)]-beta-D-GlcNAc-(1-&gt;3)-beta-D-Gal-(1-&gt;4)-[alpha-L-Fuc-(1-&gt;3)]-beta-D-GlcNAc derivative + GDP + H(+). It catalyses the reaction a neolactoside nLc6Cer + GDP-beta-L-fucose = beta-D-Gal-(1-&gt;4)-[alpha-L-Fuc-(1-&gt;3)]-beta-D-GlcNAc-(1-&gt;3)-beta-D-Gal-(1-&gt;4)-beta-D-GlcNAc-(1-&gt;3)-beta-D-Gal-(1-&gt;4)-beta-D-Glc-(1&lt;-&gt;1')-Cer + GDP + H(+). The enzyme catalyses a neolactoside nLc6Cer + GDP-beta-L-fucose = beta-D-galactosyl-(1-&gt;4)-N-acetyl-beta-D-glucosaminyl-(1-&gt;3)-beta-D-galactosyl-(1-&gt;4)-[alpha-L-fucosyl-(1-&gt;3)]-N-acetyl-beta-D-glucosaminyl-(1-&gt;3)-beta-D-galactosyl-(1-&gt;4)-beta-D-glucosyl-(1&lt;-&gt;1')-ceramide + GDP + H(+). The catalysed reaction is a neolactoside VI(3)-alpha-NeuNAc-nLc6Cer + GDP-beta-L-fucose = a neolactoside VI(3)-alpha-NeuAc,V(3)-alphaFuc-nLc6Cer + GDP + H(+). It carries out the reaction beta-D-galactosyl-(1-&gt;4)-N-acetyl-D-glucosamine + GDP-beta-L-fucose = beta-D-galactosyl-(1-&gt;4)-[alpha-L-fucosyl-(1-&gt;3)]-N-acetyl-D-glucosamine + GDP + H(+). It catalyses the reaction N-acetyl-alpha-neuraminosyl-(2-&gt;3)-beta-D-galactosyl-(1-&gt;4)-N-acetyl-beta-D-glucosamine + GDP-beta-L-fucose = N-acetyl-alpha-neuraminosyl-(2-&gt;3)-beta-D-galactosyl-(1-&gt;4)-[alpha-L-fucosyl-(1-&gt;3)]-N-acetyl-beta-D-glucosamine + GDP + H(+). The enzyme catalyses lactose + GDP-beta-L-fucose = beta-D-galactosyl-(1-&gt;4)-[alpha-L-fucosyl-(1-&gt;3)]-D-glucose + GDP + H(+). The catalysed reaction is alpha-L-Fuc-(1-&gt;2)-beta-D-Gal-(1-&gt;4)-D-Glc + GDP-beta-L-fucose = alpha-L-Fuc-(1-&gt;2)-beta-D-Gal-(1-&gt;4)-[alpha-L-Fuc-(1-&gt;3)]-D-Glc + GDP + H(+). It carries out the reaction a beta-D-galactosyl-(1-&gt;4)-N-acetyl-beta-D-6-sulfooxy-glucosaminyl derivative + GDP-beta-L-fucose = a beta-D-galactosyl-(1-&gt;4)-[alpha-L-fucosyl-(1-&gt;3)]-N-acetyl-beta-D-6-sulfooxy-glucosaminyl derivative + GDP + H(+). It participates in protein modification; protein glycosylation. In terms of biological role, catalyzes the transfer of L-fucose, from a guanosine diphosphate-beta-L-fucose, to the N-acetyl glucosamine (GlcNAc) of a distal alpha2,3 sialylated lactosamine unit of a glycoprotein- or glycolipid-linked sialopolylactosamines chain or of a distal or internal lactosamine unit of a neutral glycoprotein- or glycolipid-linked polylactosamines chain through an alpha-1,3 glycosidic linkage and participates in surface expression of the sialyl Lewis X (sLe(x)), Lewis X (Le(x)) and non sialylated VIM2 determinants. Moreover transfers fucose to H-type 2 (Fucalpha1-2Galbeta1-4GlcNAc) chain acceptor substrates and participates in difucosylated sialyl Lewis x determinants. Also fucosylates a polylactosamine substrate having a 6 sulfate modification at the GlcNAc moiety and gives rise to sialyl and non-sialyl 6-sulfo lewis X. Does not have activity towards type 1 ((Galbeta1-3GlcNAc)) and H-type 1 chain (Fucalpha1-2Galbeta1-3GlcNAc) acceptors substrates. This Pan troglodytes (Chimpanzee) protein is 4-galactosyl-N-acetylglucosaminide 3-alpha-L-fucosyltransferase FUT6.